The chain runs to 347 residues: Phospho-N-acetylmuramoyl-pentapeptide-transferase (347 aa).

10 consecutive transmembrane segments (helical) span residues 10-30 (SLVF…IFLG), 67-87 (AGGI…LPLG), 91-111 (TWLF…DDIV), 127-147 (FVLQ…IYKG), 164-184 (LGHS…AIVG), 195-215 (LDGL…VVAV), 220-240 (IPLA…SLAF), 250-270 (VFMG…CAVM), 275-295 (LLLI…ILQI), and 325-345 (VVKR…IAAL).

The protein belongs to the glycosyltransferase 4 family. MraY subfamily. Requires Mg(2+) as cofactor.

The protein resides in the cell inner membrane. The enzyme catalyses UDP-N-acetyl-alpha-D-muramoyl-L-alanyl-gamma-D-glutamyl-meso-2,6-diaminopimeloyl-D-alanyl-D-alanine + di-trans,octa-cis-undecaprenyl phosphate = di-trans,octa-cis-undecaprenyl diphospho-N-acetyl-alpha-D-muramoyl-L-alanyl-D-glutamyl-meso-2,6-diaminopimeloyl-D-alanyl-D-alanine + UMP. It participates in cell wall biogenesis; peptidoglycan biosynthesis. In terms of biological role, catalyzes the initial step of the lipid cycle reactions in the biosynthesis of the cell wall peptidoglycan: transfers peptidoglycan precursor phospho-MurNAc-pentapeptide from UDP-MurNAc-pentapeptide onto the lipid carrier undecaprenyl phosphate, yielding undecaprenyl-pyrophosphoryl-MurNAc-pentapeptide, known as lipid I. The sequence is that of Phospho-N-acetylmuramoyl-pentapeptide-transferase from Chlamydia abortus (strain DSM 27085 / S26/3) (Chlamydophila abortus).